Reading from the N-terminus, the 165-residue chain is SsrA-binding protein (165 aa).

A disordered region spans residues 141-165 (KLHDKRQDEKRKQADREVKSALARY). The segment covering 145 to 159 (KRQDEKRKQADREVK) has biased composition (basic and acidic residues).

Belongs to the SmpB family.

It is found in the cytoplasm. Its function is as follows. Required for rescue of stalled ribosomes mediated by trans-translation. Binds to transfer-messenger RNA (tmRNA), required for stable association of tmRNA with ribosomes. tmRNA and SmpB together mimic tRNA shape, replacing the anticodon stem-loop with SmpB. tmRNA is encoded by the ssrA gene; the 2 termini fold to resemble tRNA(Ala) and it encodes a 'tag peptide', a short internal open reading frame. During trans-translation Ala-aminoacylated tmRNA acts like a tRNA, entering the A-site of stalled ribosomes, displacing the stalled mRNA. The ribosome then switches to translate the ORF on the tmRNA; the nascent peptide is terminated with the 'tag peptide' encoded by the tmRNA and targeted for degradation. The ribosome is freed to recommence translation, which seems to be the essential function of trans-translation. In Prochlorococcus marinus (strain MIT 9313), this protein is SsrA-binding protein.